Consider the following 775-residue polypeptide: Dipeptidyl peptidase 4 (775 aa).

The first 15 residues, 1-15 (MKFLSLLLLVGVAQA), serve as a signal peptide directing secretion. Residues Asn-81, Asn-111, and Asn-219 are each glycosylated (N-linked (GlcNAc...) asparagine). Residues Ser-613, Asp-690, and His-725 each act as charge relay system in the active site. Asn-731 is a glycosylation site (N-linked (GlcNAc...) asparagine).

Belongs to the peptidase S9B family.

The protein resides in the secreted. It carries out the reaction Release of an N-terminal dipeptide, Xaa-Yaa-|-Zaa-, from a polypeptide, preferentially when Yaa is Pro, provided Zaa is neither Pro nor hydroxyproline.. In terms of biological role, extracellular dipeptidyl-peptidase which removes N-terminal dipeptides sequentially from polypeptides having unsubstituted N-termini provided that the penultimate residue is proline. Contributes to pathogenicity. This is Dipeptidyl peptidase 4 (DPP4) from Arthroderma otae (strain ATCC MYA-4605 / CBS 113480) (Microsporum canis).